The chain runs to 436 residues: Divalent metal cation transporter MntH (436 aa).

Over residues 1-22 the composition is skewed to basic and acidic residues; it reads MDSRSPSLPDDRPDPPEQHLDA. Positions 1–31 are disordered; it reads MDSRSPSLPDDRPDPPEQHLDARAGATLRGT. The next 11 membrane-spanning stretches (helical) occupy residues 40 to 60, 71 to 91, 115 to 135, 144 to 164, 177 to 197, 216 to 236, 264 to 284, 304 to 324, 354 to 374, 375 to 395, and 411 to 431; these read ILPFLGPAVIASIAYMDPGNF, GYSLLWVILAANLMAMVIQNL, LVWFYWIQAELVAMATDLAEF, LLTGLPMFWGAVVTGVVTFWL, LAVGAFVLMIGVAYLVQVVLA, GSAYLAVGIIGATVMPHVIYL, VIAAMGLAGLINMSMLAVAAA, LTPLLGPAASVLFAVALLASG, LITMLPAFIVILLGMDPSSVL, ILSQVILCFGVPFALVPLLLF, and FTVIGWVIAVIIIALNGYLLW.

It belongs to the NRAMP family.

It localises to the cell membrane. In terms of biological role, h(+)-stimulated, divalent metal cation uptake system. This is Divalent metal cation transporter MntH from Deinococcus radiodurans (strain ATCC 13939 / DSM 20539 / JCM 16871 / CCUG 27074 / LMG 4051 / NBRC 15346 / NCIMB 9279 / VKM B-1422 / R1).